The chain runs to 180 residues: Pro-glucagon (180 aa).

An N-terminal signal peptide occupies residues 1 to 20 (MKNIYIVAGFFVVLVQGSWQ). The tract at residues 25–59 (DTEEKSRSFPASQTDPLEDPDQINEDKRHSQGTFT) is disordered. Ser-54 carries the phosphoserine modification. Positions 84 to 89 (NRNNIA) are excised as a propeptide. Residues Ser-105 and Ser-108 each carry the phosphoserine modification. At Arg-127 the chain carries Arginine amide. A propeptide spanning residues 131–145 (DFPEEVTIVEELGRR) is cleaved from the precursor. A phosphoserine mark is found at Ser-150 and Ser-152.

It belongs to the glucagon family. Post-translationally, proglucagon is post-translationally processed in a tissue-specific manner in pancreatic A cells and intestinal L cells. In pancreatic A cells, the major bioactive hormone is glucagon cleaved by PCSK2/PC2. In the intestinal L cells PCSK1/PC1 liberates GLP-1, GLP-2, glicentin and oxyntomodulin. GLP-1 is further N-terminally truncated by post-translational processing in the intestinal L cells resulting in GLP-1(7-37) GLP-1-(7-36)amide. The C-terminal amidation is neither important for the metabolism of GLP-1 nor for its effects on the endocrine pancreas.

It is found in the secreted. Functionally, plays a key role in glucose metabolism and homeostasis. Regulates blood glucose by increasing gluconeogenesis and decreasing glycolysis. A counterregulatory hormone of insulin, raises plasma glucose levels in response to insulin-induced hypoglycemia. Plays an important role in initiating and maintaining hyperglycemic conditions in diabetes. Potent stimulator of glucose-dependent insulin release. Also stimulates insulin release in response to IL6. Plays important roles on gastric motility and the suppression of plasma glucagon levels. May be involved in the suppression of satiety and stimulation of glucose disposal in peripheral tissues, independent of the actions of insulin. Has growth-promoting activities on intestinal epithelium. May also regulate the hypothalamic pituitary axis (HPA) via effects on LH, TSH, CRH, oxytocin, and vasopressin secretion. Increases islet mass through stimulation of islet neogenesis and pancreatic beta cell proliferation. Inhibits beta cell apoptosis. Its function is as follows. Stimulates intestinal growth and up-regulates villus height in the small intestine, concomitant with increased crypt cell proliferation and decreased enterocyte apoptosis. The gastrointestinal tract, from the stomach to the colon is the principal target for GLP-2 action. Plays a key role in nutrient homeostasis, enhancing nutrient assimilation through enhanced gastrointestinal function, as well as increasing nutrient disposal. Stimulates intestinal glucose transport and decreases mucosal permeability. In terms of biological role, significantly reduces food intake. Inhibits gastric emptying in humans. Suppression of gastric emptying may lead to increased gastric distension, which may contribute to satiety by causing a sensation of fullness. Functionally, may modulate gastric acid secretion and the gastro-pyloro-duodenal activity. May play an important role in intestinal mucosal growth in the early period of life. This Mesocricetus auratus (Golden hamster) protein is Pro-glucagon (GCG).